We begin with the raw amino-acid sequence, 265 residues long: 3-methyl-2-oxobutanoate hydroxymethyltransferase (265 aa).

The Mg(2+) site is built by Asp41 and Asp80. Residues 41–42, Asp80, and Lys109 contribute to the 3-methyl-2-oxobutanoate site; that span reads DS. Glu111 is a Mg(2+) binding site. Catalysis depends on Glu178, which acts as the Proton acceptor.

Belongs to the PanB family. In terms of assembly, homodecamer; pentamer of dimers. The cofactor is Mg(2+).

It is found in the cytoplasm. It catalyses the reaction 3-methyl-2-oxobutanoate + (6R)-5,10-methylene-5,6,7,8-tetrahydrofolate + H2O = 2-dehydropantoate + (6S)-5,6,7,8-tetrahydrofolate. Its pathway is cofactor biosynthesis; (R)-pantothenate biosynthesis; (R)-pantoate from 3-methyl-2-oxobutanoate: step 1/2. Its function is as follows. Catalyzes the reversible reaction in which hydroxymethyl group from 5,10-methylenetetrahydrofolate is transferred onto alpha-ketoisovalerate to form ketopantoate. The sequence is that of 3-methyl-2-oxobutanoate hydroxymethyltransferase from Thermosipho africanus (strain TCF52B).